The following is a 218-amino-acid chain: Protein-L-isoaspartate O-methyltransferase (218 aa).

Ser69 is a catalytic residue.

This sequence belongs to the methyltransferase superfamily. L-isoaspartyl/D-aspartyl protein methyltransferase family.

It is found in the cytoplasm. It carries out the reaction [protein]-L-isoaspartate + S-adenosyl-L-methionine = [protein]-L-isoaspartate alpha-methyl ester + S-adenosyl-L-homocysteine. In terms of biological role, catalyzes the methyl esterification of L-isoaspartyl residues in peptides and proteins that result from spontaneous decomposition of normal L-aspartyl and L-asparaginyl residues. It plays a role in the repair and/or degradation of damaged proteins. The polypeptide is Protein-L-isoaspartate O-methyltransferase (Aromatoleum aromaticum (strain DSM 19018 / LMG 30748 / EbN1) (Azoarcus sp. (strain EbN1))).